Consider the following 317-residue polypeptide: Methionyl-tRNA formyltransferase (317 aa).

Residue 112 to 115 coordinates (6S)-5,6,7,8-tetrahydrofolate; the sequence is SLLP.

It belongs to the Fmt family.

The catalysed reaction is L-methionyl-tRNA(fMet) + (6R)-10-formyltetrahydrofolate = N-formyl-L-methionyl-tRNA(fMet) + (6S)-5,6,7,8-tetrahydrofolate + H(+). Attaches a formyl group to the free amino group of methionyl-tRNA(fMet). The formyl group appears to play a dual role in the initiator identity of N-formylmethionyl-tRNA by promoting its recognition by IF2 and preventing the misappropriation of this tRNA by the elongation apparatus. The chain is Methionyl-tRNA formyltransferase from Mesorhizobium japonicum (strain LMG 29417 / CECT 9101 / MAFF 303099) (Mesorhizobium loti (strain MAFF 303099)).